The sequence spans 201 residues: Small ribosomal subunit protein uS4c (201 aa).

The S4 RNA-binding domain maps to 89–150 (MRLDNILFRL…KERSKALIQN (62 aa)).

Belongs to the universal ribosomal protein uS4 family. In terms of assembly, part of the 30S ribosomal subunit. Contacts protein S5. The interaction surface between S4 and S5 is involved in control of translational fidelity.

The protein resides in the plastid. The protein localises to the chloroplast. In terms of biological role, one of the primary rRNA binding proteins, it binds directly to 16S rRNA where it nucleates assembly of the body of the 30S subunit. With S5 and S12 plays an important role in translational accuracy. This is Small ribosomal subunit protein uS4c (rps4) from Phalaenopsis aphrodite subsp. formosana (Moth orchid).